The sequence spans 248 residues: MGPVRLGILLFLFLAVHEAWAGMLKEEDDDTERLPSKCEVCKLLSTELQAELSRTGRSREVLELGQVLDTGKRKRHVPYSVSETRLEEALENLCERILDYSVHAERKGSLRYAKGQSQTMATLKGLVQKGVKVDLGIPLELWDEPSVEVTYLKKQCETMLEEFEDIVGDWYFHHQEQPLQNFLCEGHVLPAAETACLQETWTGKEITDGEEKTEGEEEQEEEEEEEEEEGGDKMTKTGSHPKLDREDL.

A signal peptide spans 1 to 21; it reads MGPVRLGILLFLFLAVHEAWA. Cystine bridges form between C38–C196, C41–C184, and C94–C156. Residues 200–248 form a disordered region; sequence TWTGKEITDGEEKTEGEEEQEEEEEEEEEEGGDKMTKTGSHPKLDREDL. Residues 213–230 are compositionally biased toward acidic residues; the sequence is TEGEEEQEEEEEEEEEEG. A compositionally biased stretch (basic and acidic residues) spans 231-248; the sequence is GDKMTKTGSHPKLDREDL.

This sequence belongs to the canopy family. In terms of assembly, interacts with TLR4.

The protein resides in the secreted. Plays a role in the regulation of the cell surface expression of TLR4. This Homo sapiens (Human) protein is Protein canopy homolog 4 (CNPY4).